A 270-amino-acid chain; its full sequence is Gap junction beta-3 protein (270 aa).

Topologically, residues 1–20 (MDWKKLQDLLSGVNQYSTAF) are cytoplasmic. The helical transmembrane segment at 21–40 (GRIWLSVVFVFRVLVYVVAA) threads the bilayer. Residues 41-75 (ERVWGDEQKDFDCNTRQPGCTNVCYDNFFPISNIR) lie on the Extracellular side of the membrane. A helical transmembrane segment spans residues 76–98 (LWALQLIFVTCPSMLVILHVAYR). Topologically, residues 99–126 (EERERKHRQKHGEHCAKLYSHPGKKHGG) are cytoplasmic. The chain crosses the membrane as a helical span at residues 127-149 (LWWTYLFSLIFKLIIELVFLYVL). Residues 150-188 (HTLWHGFTMPRLVQCASVVPCPNTVDCYIARPTEKKVFT) lie on the Extracellular side of the membrane. Residues 189–211 (YFMVGASAVCIILTICEICYLIF) traverse the membrane as a helical segment. Topologically, residues 212 to 270 (HRIMRGLSKDKSTKSISSPKSSSRASTCRCHHKLLESGDLEAVPADDKLQASAPSLTPI) are cytoplasmic.

Belongs to the connexin family. Beta-type (group I) subfamily. As to quaternary structure, a connexon is composed of a hexamer of connexins. Interacts with CNST.

It localises to the cell membrane. It is found in the cell junction. The protein resides in the gap junction. Functionally, one gap junction consists of a cluster of closely packed pairs of transmembrane channels, the connexons, through which materials of low MW diffuse from one cell to a neighboring cell. This chain is Gap junction beta-3 protein (Gjb3), found in Rattus norvegicus (Rat).